Reading from the N-terminus, the 307-residue chain is Putative serpin A13 (307 aa).

The first 21 residues, 1 to 21 (MEASRWWLLVTVLMAGAHCVA), serve as a signal peptide directing secretion. Residues N150 and N250 are each glycosylated (N-linked (GlcNAc...) asparagine).

It belongs to the serpin family.

Its subcellular location is the secreted. The protein is Putative serpin A13 (SERPINA13P) of Homo sapiens (Human).